The sequence spans 136 residues: NADPH-dependent 7-cyano-7-deazaguanine reductase (136 aa).

Cys-50 serves as the catalytic Thioimide intermediate. The active-site Proton donor is Asp-57. Residues 72-74 (YEL) and 91-92 (HE) contribute to the substrate site.

Belongs to the GTP cyclohydrolase I family. QueF type 1 subfamily.

The protein localises to the cytoplasm. The catalysed reaction is 7-aminomethyl-7-carbaguanine + 2 NADP(+) = 7-cyano-7-deazaguanine + 2 NADPH + 3 H(+). It participates in tRNA modification; tRNA-queuosine biosynthesis. Catalyzes the NADPH-dependent reduction of 7-cyano-7-deazaguanine (preQ0) to 7-aminomethyl-7-deazaguanine (preQ1). The chain is NADPH-dependent 7-cyano-7-deazaguanine reductase from Prochlorococcus marinus (strain MIT 9312).